Consider the following 151-residue polypeptide: NADH-quinone oxidoreductase subunit I 2 (151 aa).

2 consecutive 4Fe-4S ferredoxin-type domains span residues 49-82 (PRLN…VTSE) and 93-122 (VTFT…LTQD). Residues C62, C65, C68, C72, C102, C105, C108, and C112 each coordinate [4Fe-4S] cluster.

It belongs to the complex I 23 kDa subunit family. NDH-1 is composed of 14 different subunits. Subunits NuoA, H, J, K, L, M, N constitute the membrane sector of the complex. [4Fe-4S] cluster is required as a cofactor.

The protein localises to the cell inner membrane. It catalyses the reaction a quinone + NADH + 5 H(+)(in) = a quinol + NAD(+) + 4 H(+)(out). Its function is as follows. NDH-1 shuttles electrons from NADH, via FMN and iron-sulfur (Fe-S) centers, to quinones in the respiratory chain. The immediate electron acceptor for the enzyme in this species is believed to be ubiquinone. Couples the redox reaction to proton translocation (for every two electrons transferred, four hydrogen ions are translocated across the cytoplasmic membrane), and thus conserves the redox energy in a proton gradient. This Solibacter usitatus (strain Ellin6076) protein is NADH-quinone oxidoreductase subunit I 2.